The sequence spans 151 residues: UPF0756 membrane protein GTNG_2661 (151 aa).

Helical transmembrane passes span 5-25 (VLFLLLLLAIGVIAKNQSLII), 53-73 (WGVTVITVAVLAPIATGEIGF), 86-106 (WIALLFGIFVALIAKGGVMLL), and 116-136 (LVLGTVIAVSLFHGVAVGPLI).

The protein belongs to the UPF0756 family.

Its subcellular location is the cell membrane. This Geobacillus thermodenitrificans (strain NG80-2) protein is UPF0756 membrane protein GTNG_2661.